The following is a 179-amino-acid chain: Nuclear transcription factor Y subunit B (179 aa).

The disordered stretch occupies residues 1 to 32 (MAEAPASPGGGGGSHESGSPRGGGGGGSVREQ). Residues 8–28 (PGGGGGSHESGSPRGGGGGGS) show a composition bias toward gly residues. A DNA-binding region spans residues 36–42 (LPIANIS). A subunit association domain (SAD) region spans residues 63–74 (VQECVSEFISFI). The segment at 147–179 (SSSAAEGMGQQGAYNQGMGYMQPQYHNGDISNV) is disordered.

The protein belongs to the NFYB/HAP3 subunit family. In terms of assembly, heterotrimeric transcription factor composed of three components, NF-YA, NF-YB and NF-YC. NF-YB and NF-YC must interact and dimerize for NF-YA association and DNA binding.

It localises to the nucleus. Its function is as follows. Component of the NF-Y/HAP transcription factor complex. The NF-Y complex stimulates the transcription of various genes by recognizing and binding to a CCAAT motif in promoters. This chain is Nuclear transcription factor Y subunit B (NFY2), found in Zea mays (Maize).